Consider the following 138-residue polypeptide: uncharacterized protein (138 aa).

The next 3 helical transmembrane spans lie at 17 to 37 (IVVSVFYLILFFLILNITIYF), 43 to 63 (FTVVVKNSVLTSFFVNLLLVC), and 117 to 137 (FWWMNLIVYLVGSLVSGLVSL).

The protein localises to the cell membrane. This is an uncharacterized protein from Mycoplasma genitalium (strain ATCC 33530 / DSM 19775 / NCTC 10195 / G37) (Mycoplasmoides genitalium).